The chain runs to 425 residues: Dual-specificity RNA methyltransferase RlmN (425 aa).

Glu136 serves as the catalytic Proton acceptor. The 248-residue stretch at 142 to 389 folds into the Radical SAM core domain; the sequence is GDDRGTLCVS…VRTPRGRDIL (248 aa). Cys149 and Cys392 are disulfide-bonded. Positions 156, 160, and 163 each coordinate [4Fe-4S] cluster. S-adenosyl-L-methionine is bound by residues 218-219, Ser250, 272-274, and Asn349; these read GE and SLH. Residue Cys392 is the S-methylcysteine intermediate of the active site.

The protein belongs to the radical SAM superfamily. RlmN family. [4Fe-4S] cluster serves as cofactor.

The protein localises to the cytoplasm. The enzyme catalyses adenosine(2503) in 23S rRNA + 2 reduced [2Fe-2S]-[ferredoxin] + 2 S-adenosyl-L-methionine = 2-methyladenosine(2503) in 23S rRNA + 5'-deoxyadenosine + L-methionine + 2 oxidized [2Fe-2S]-[ferredoxin] + S-adenosyl-L-homocysteine. It catalyses the reaction adenosine(37) in tRNA + 2 reduced [2Fe-2S]-[ferredoxin] + 2 S-adenosyl-L-methionine = 2-methyladenosine(37) in tRNA + 5'-deoxyadenosine + L-methionine + 2 oxidized [2Fe-2S]-[ferredoxin] + S-adenosyl-L-homocysteine. Specifically methylates position 2 of adenine 2503 in 23S rRNA and position 2 of adenine 37 in tRNAs. m2A2503 modification seems to play a crucial role in the proofreading step occurring at the peptidyl transferase center and thus would serve to optimize ribosomal fidelity. This is Dual-specificity RNA methyltransferase RlmN from Methylorubrum populi (strain ATCC BAA-705 / NCIMB 13946 / BJ001) (Methylobacterium populi).